A 329-amino-acid polypeptide reads, in one-letter code: tRNA N6-adenosine threonylcarbamoyltransferase (329 aa).

His-110 and His-114 together coordinate Fe cation. Substrate contacts are provided by residues 132–136 (VISGG), Asp-165, Gly-178, and Asn-271. Position 299 (Asp-299) interacts with Fe cation.

It belongs to the KAE1 / TsaD family. Fe(2+) is required as a cofactor.

The protein resides in the cytoplasm. The enzyme catalyses L-threonylcarbamoyladenylate + adenosine(37) in tRNA = N(6)-L-threonylcarbamoyladenosine(37) in tRNA + AMP + H(+). In terms of biological role, required for the formation of a threonylcarbamoyl group on adenosine at position 37 (t(6)A37) in tRNAs that read codons beginning with adenine. Is involved in the transfer of the threonylcarbamoyl moiety of threonylcarbamoyl-AMP (TC-AMP) to the N6 group of A37, together with TsaE and TsaB. TsaD likely plays a direct catalytic role in this reaction. The sequence is that of tRNA N6-adenosine threonylcarbamoyltransferase from Neorickettsia sennetsu (strain ATCC VR-367 / Miyayama) (Ehrlichia sennetsu).